The sequence spans 463 residues: tRNA (guanine(10)-N(2))-methyltransferase TRMT11 (463 aa).

Ala-2 carries the post-translational modification N-acetylalanine.

The protein belongs to the class I-like SAM-binding methyltransferase superfamily. TRM11 methyltransferase family. Part of the heterodimeric TRMT11-TRM112 methyltransferase complex; this complex forms an active tRNA methyltransferase, where TRMT112 acts as an activator of the catalytic subunit TRMT11.

It localises to the cytoplasm. It catalyses the reaction guanosine(10) in tRNA + S-adenosyl-L-methionine = N(2)-methylguanosine(10) in tRNA + S-adenosyl-L-homocysteine + H(+). Functionally, catalytic subunit of the TRMT11-TRM112 methyltransferase complex, that specifically mediates the S-adenosyl-L-methionine-dependent N(2)-methylation of guanosine nucleotide at position 10 (m2G10) in tRNAs. This is one of the major tRNA (guanine-N(2))-methyltransferases. In Rattus norvegicus (Rat), this protein is tRNA (guanine(10)-N(2))-methyltransferase TRMT11.